The following is a 355-amino-acid chain: Probable nitronate monooxygenase (355 aa).

Residues asparagine 71, glutamine 175, glycine 180, glycine 218, and 237–240 (QMGT) each bind FMN.

Belongs to the nitronate monooxygenase family. NMO class I subfamily. The cofactor is FMN.

It catalyses the reaction 3 propionate 3-nitronate + 3 O2 + H2O = 3 3-oxopropanoate + 2 nitrate + nitrite + H2O2 + 3 H(+). Functionally, nitronate monooxygenase that uses molecular oxygen to catalyze the oxidative denitrification of alkyl nitronates. Acts on propionate 3-nitronate (P3N), the presumed physiological substrate. Probably functions in the detoxification of P3N, a metabolic poison produced by plants and fungi as a defense mechanism. This is Probable nitronate monooxygenase from Staphylococcus aureus (strain MRSA252).